The following is a 392-amino-acid chain: Integrin-linked kinase-associated serine/threonine phosphatase 2C (392 aa).

Met-1 carries the post-translational modification N-acetylmethionine. The interval 1–91 (MDLFGDLPEP…PEEEKNGGEE (91 aa)) is disordered. Residues 56–70 (SGNSGSLATSGSQVV) are compositionally biased toward polar residues. The segment covering 72–91 (TEGKGAKRKAPEEEKNGGEE) has biased composition (basic and acidic residues). The region spanning 108 to 390 (KGYVAERKGE…DNVTVMVVRI (283 aa)) is the PPM-type phosphatase domain. Residues Asp-152 and Gly-153 each coordinate Mn(2+). Lys-210 bears the N6-acetyllysine mark. Positions 326 and 381 each coordinate Mn(2+).

Belongs to the PP2C family. Interacts with ILK. Requires Mg(2+) as cofactor. It depends on Mn(2+) as a cofactor.

The protein resides in the cytoplasm. It carries out the reaction O-phospho-L-seryl-[protein] + H2O = L-seryl-[protein] + phosphate. The enzyme catalyses O-phospho-L-threonyl-[protein] + H2O = L-threonyl-[protein] + phosphate. Protein phosphatase that may play a role in regulation of cell cycle progression via dephosphorylation of its substrates whose appropriate phosphorylation states might be crucial for cell proliferation. Selectively associates with integrin linked kinase (ILK), to modulate cell adhesion and growth factor signaling. Inhibits the ILK-GSK3B signaling axis and may play an important role in inhibiting oncogenic transformation. This Mus musculus (Mouse) protein is Integrin-linked kinase-associated serine/threonine phosphatase 2C (Ilkap).